The sequence spans 475 residues: UDP-N-acetylmuramate--L-alanine ligase (475 aa).

118-124 (GTHGKTT) lines the ATP pocket.

Belongs to the MurCDEF family.

It localises to the cytoplasm. It catalyses the reaction UDP-N-acetyl-alpha-D-muramate + L-alanine + ATP = UDP-N-acetyl-alpha-D-muramoyl-L-alanine + ADP + phosphate + H(+). The protein operates within cell wall biogenesis; peptidoglycan biosynthesis. Functionally, cell wall formation. The protein is UDP-N-acetylmuramate--L-alanine ligase of Paracoccus denitrificans (strain Pd 1222).